Reading from the N-terminus, the 738-residue chain is Glucan 1,4-alpha-glucosidase SusB (738 aa).

Positions 1–21 (MKKRKILSLIAFLCISFIANA) are cleaved as a signal peptide. Position 194 (E194) interacts with Ca(2+). Residues 215-217 (PNS), 437-439 (HHE), and 507-508 (HE) each bind substrate. E508, E526, and E532 together coordinate Ca(2+). E532 functions as the Proton donor/acceptor in the catalytic mechanism.

Belongs to the glycosyl hydrolase 97 family. In terms of assembly, monomer. Ca(2+) is required as a cofactor.

The protein resides in the periplasm. The catalysed reaction is Hydrolysis of terminal (1-&gt;4)-linked alpha-D-glucose residues successively from non-reducing ends of the chains with release of beta-D-glucose.. The protein operates within glycan degradation; starch degradation. Functionally, glucoamylase that hydrolyzes alpha-1,4-glucosidic linkages, alpha-1,6-, alpha-1,3- and alpha-1,2-glucosidic linkages during starch degradation. The polypeptide is Glucan 1,4-alpha-glucosidase SusB (susB) (Bacteroides thetaiotaomicron (strain ATCC 29148 / DSM 2079 / JCM 5827 / CCUG 10774 / NCTC 10582 / VPI-5482 / E50)).